A 520-amino-acid polypeptide reads, in one-letter code: CBL-interacting serine/threonine-protein kinase 18 (520 aa).

2 disordered regions span residues 1–29 (MAQA…PHPK) and 48–67 (TDKD…SPRN). A compositionally biased stretch (pro residues) spans 17–29 (PDPPPPPPPPHPK). Low complexity predominate over residues 55-66 (SPQSPRSPRSPR). The Protein kinase domain occupies 74 to 328 (YELGKLLGHG…IPEIMKNRWF (255 aa)). ATP contacts are provided by residues 80 to 88 (LGHGTFAKV) and lysine 103. Catalysis depends on aspartate 196, which acts as the Proton acceptor. Residues 214 to 243 (DFGLSAVAEQLRQDGLCHTFCGTPAYIAPE) are activation loop. Phosphoserine is present on serine 218. Residue threonine 232 is modified to Phosphothreonine. The segment at 349-368 (EDEEEEASSSGRSSTVSESD) is disordered. The segment covering 356 to 366 (SSSGRSSTVSE) has biased composition (low complexity). An NAF domain is found at 382–406 (PRPSSLNAFDIISFSSGFDLSGLFE). Residues 410-439 (GEGTRFVSGAPVSKIISKLEEIAKIVSFTV) are PPI.

It belongs to the protein kinase superfamily. CAMK Ser/Thr protein kinase family. SNF1 subfamily. As to quaternary structure, interacts with CBL1 and CBL9. Requires Mn(2+) as cofactor.

It carries out the reaction L-seryl-[protein] + ATP = O-phospho-L-seryl-[protein] + ADP + H(+). The catalysed reaction is L-threonyl-[protein] + ATP = O-phospho-L-threonyl-[protein] + ADP + H(+). CIPK serine-threonine protein kinases interact with CBL proteins. Binding of a CBL protein to the regulatory NAF domain of CIPK protein lead to the activation of the kinase in a calcium-dependent manner. The protein is CBL-interacting serine/threonine-protein kinase 18 (CIPK18) of Arabidopsis thaliana (Mouse-ear cress).